The sequence spans 28 residues: Ribosome-inactivating protein pleuturegin (28 aa).

Belongs to the ribosome-inactivating protein family.

The enzyme catalyses Endohydrolysis of the N-glycosidic bond at one specific adenosine on the 28S rRNA.. In terms of biological role, inhibits protein synthesis in animal cells. Does not possess ribonuclease activity. The sequence is that of Ribosome-inactivating protein pleuturegin from Pleurotus tuber-regium (King tuber oyster mushroom).